A 427-amino-acid chain; its full sequence is Polyprenol-phosphate-mannose-dependent alpha-(1-2)-phosphatidylinositol mannoside mannosyltransferase (427 aa).

10 helical membrane-spanning segments follow: residues 18 to 38, 101 to 121, 143 to 163, 191 to 211, 218 to 238, 279 to 299, 308 to 328, 331 to 346, 351 to 371, and 386 to 406; these read LWCL…WRLF, ASVA…AIVL, WLAV…SSNF, LMLG…LYFL, AALT…VLAW, ERFA…IWAM, PTLA…VSWS, WVWM…LLGW, VALA…PIDL, and LAGM…GLTV.

Belongs to the glycosyltransferase 87 family.

Its subcellular location is the cell membrane. Its pathway is phospholipid metabolism; phosphatidylinositol metabolism. Responsible for the addition of alpha-(1-2) mannose branches to the linear mannan core on the biosynthetic pathway to mature lipoarabinomannan (LAM). This Mycobacterium tuberculosis (strain ATCC 25618 / H37Rv) protein is Polyprenol-phosphate-mannose-dependent alpha-(1-2)-phosphatidylinositol mannoside mannosyltransferase.